The following is a 197-amino-acid chain: Nucleoid occlusion factor SlmA (197 aa).

The 61-residue stretch at Ile-7–Leu-67 folds into the HTH tetR-type domain. The segment at residues Thr-30–Phe-49 is a DNA-binding region (H-T-H motif).

The protein belongs to the nucleoid occlusion factor SlmA family. Homodimer. Interacts with FtsZ.

It is found in the cytoplasm. Its subcellular location is the nucleoid. Functionally, required for nucleoid occlusion (NO) phenomenon, which prevents Z-ring formation and cell division over the nucleoid. Acts as a DNA-associated cell division inhibitor that binds simultaneously chromosomal DNA and FtsZ, and disrupts the assembly of FtsZ polymers. SlmA-DNA-binding sequences (SBS) are dispersed on non-Ter regions of the chromosome, preventing FtsZ polymerization at these regions. This Shewanella sediminis (strain HAW-EB3) protein is Nucleoid occlusion factor SlmA.